We begin with the raw amino-acid sequence, 579 residues long: XK-related protein 7 (579 aa).

Residues 1 to 18 (MAAKSDGAAASASPDPEG) show a composition bias toward low complexity. Residues 1–40 (MAAKSDGAAASASPDPEGAAGGARGSAGGRGEAAAAAGPP) form a disordered region. The span at 19-31 (AAGGARGSAGGRG) shows a compositional bias: gly residues. 2 consecutive transmembrane segments (helical) span residues 59-79 (WVLC…WLAA) and 89-109 (YFSL…LLSF). The tract at residues 146-165 (GAFRTKEGSPEPGPQPAPSS) is disordered. 5 helical membrane-spanning segments follow: residues 260–280 (LLPA…LASY), 314–334 (GLAF…FIVA), 355–375 (WEEI…WFNV), 384–404 (MTLY…FWYS), and 415–435 (LIMV…MCVY). The interval 466 to 510 (ADAITSPPRSLPRTTGAERDGASAGERAGTPTPPVFQVRPGLPPT) is disordered.

This sequence belongs to the XK family.

The protein resides in the cell membrane. The polypeptide is XK-related protein 7 (Homo sapiens (Human)).